A 309-amino-acid chain; its full sequence is Dicarboxylate carrier UCP2 (309 aa).

Residues 1–16 (MVGFKATDVPPTATVK) lie on the Mitochondrial intermembrane side of the membrane. Solcar repeat units lie at residues 11–106 (PTAT…VKQF), 114–203 (ASIG…IKDA), and 212–297 (DDLP…LKRA). The interval 16-63 (KFLGAGTAACIADLITFPLDTAKVRLQIQGESQGPVHATASAQYRGVM) is important for interaction with long-chain fatty acids. The helical transmembrane segment at 17 to 40 (FLGAGTAACIADLITFPLDTAKVR) threads the bilayer. Residues 41-77 (LQIQGESQGPVHATASAQYRGVMGTILTMVRTEGPRS) are Mitochondrial matrix-facing. The helical transmembrane segment at 78-103 (LYNGLVAGLQRQMSFASVRIGLYDSV) threads the bilayer. At 104 to 119 (KQFYTKGSEHASIGSR) the chain is on the mitochondrial intermembrane side. A helical transmembrane segment spans residues 120 to 145 (LLAGSTTGALAVAVAQPTDVVKVRFQ). The Mitochondrial matrix segment spans residues 146–173 (AQARAGGGRRYQSTVNAYKTIAREEGFR). Residues 174-199 (GLWKGTSPNVARNAIVNCAELVTYDL) traverse the membrane as a helical segment. Residues 200 to 217 (IKDALLKANLMTDDLPCH) lie on the Mitochondrial intermembrane side of the membrane. The chain crosses the membrane as a helical span at residues 218-242 (FTSAFGAGFCTTVIASPVDVVKTRY). Topologically, residues 243–268 (MNSALGQYSSAGHCALTMLQKEGPRA) are mitochondrial matrix. Residues 269 to 294 (FYKGFMPSFLRLGSWNVVMFVTYEQL) form a helical membrane-spanning segment. The tract at residues 278–285 (LRLGSWNV) is important for interaction with long-chain fatty acids. The Mitochondrial intermembrane portion of the chain corresponds to 295 to 309 (KRALMAACTSREAPF).

Belongs to the mitochondrial carrier (TC 2.A.29) family. In terms of assembly, homotetramer. Adopts an asymmetrical dimer of dimers functional form. Interacts with MICU1 (when methylated); leading to decrease the calcium sensitivity of MICU1.

It is found in the mitochondrion inner membrane. The enzyme catalyses L-aspartate(out) + phosphate(in) + H(+)(in) = L-aspartate(in) + phosphate(out) + H(+)(out). The catalysed reaction is oxaloacetate(out) + phosphate(in) + H(+)(in) = oxaloacetate(in) + phosphate(out) + H(+)(out). It carries out the reaction (S)-malate(out) + phosphate(in) + H(+)(in) = (S)-malate(in) + phosphate(out) + H(+)(out). It catalyses the reaction malonate(out) + phosphate(in) + H(+)(in) = malonate(in) + phosphate(out) + H(+)(out). The enzyme catalyses sulfate(out) + phosphate(in) + H(+)(in) = sulfate(in) + phosphate(out) + H(+)(out). The catalysed reaction is (S)-malate(out) = (S)-malate(in). It carries out the reaction L-aspartate(out) = L-aspartate(in). It catalyses the reaction phosphate(in) = phosphate(out). The enzyme catalyses chloride(in) = chloride(out). The catalysed reaction is H(+)(in) = H(+)(out). It carries out the reaction a long-chain fatty acid(out) = a long-chain fatty acid(in). Antiporter that exports dicarboxylate intermediates of the Krebs cycle in exchange for phosphate plus a proton across the inner membrane of mitochondria, a process driven by mitochondrial motive force with an overall impact on glycolysis, glutaminolysis and glutathione-dependent redox balance. Continuous export of oxaloacetate and related four-carbon dicarboxylates from mitochondrial matrix into the cytosol negatively regulates the oxidation of acetyl-CoA substrates via the Krebs cycle lowering the ATP/ADP ratio and reactive oxygen species (ROS) production. May mediate inducible proton entry into the mitochondrial matrix affecting ATP turnover as a protection mechanism against oxidative stress. The proton currents are most likely associated with fatty acid flipping across the inner membrane of mitochondria in a metabolic process regulated by free fatty acids and purine nucleotides. Regulates the use of glucose as a source of energy. Required for glucose-induced DRP1-dependent mitochondrial fission and neuron activation in the ventromedial nucleus of the hypothalamus (VMH). This mitochondrial adaptation mechanism modulates the VMH pool of glucose-excited neurons with an impact on systemic glucose homeostasis. Regulates ROS levels and metabolic reprogramming of macrophages during the resolution phase of inflammation. Attenuates ROS production in response to IL33 to preserve the integrity of the Krebs cycle required for persistent production of itaconate and subsequent GATA3-dependent differentiation of inflammation-resolving alternatively activated macrophages. Can unidirectionally transport anions including L-malate, L-aspartate, phosphate and chloride ions. Does not mediate adaptive thermogenesis. The sequence is that of Dicarboxylate carrier UCP2 (UCP2) from Pongo abelii (Sumatran orangutan).